The sequence spans 171 residues: Adenine phosphoribosyltransferase (171 aa).

Belongs to the purine/pyrimidine phosphoribosyltransferase family. In terms of assembly, homodimer.

It localises to the cytoplasm. It carries out the reaction AMP + diphosphate = 5-phospho-alpha-D-ribose 1-diphosphate + adenine. It functions in the pathway purine metabolism; AMP biosynthesis via salvage pathway; AMP from adenine: step 1/1. Functionally, catalyzes a salvage reaction resulting in the formation of AMP, that is energically less costly than de novo synthesis. The sequence is that of Adenine phosphoribosyltransferase from Acidiphilium cryptum (strain JF-5).